A 100-amino-acid chain; its full sequence is MVPYEYYVVLSGLLMVLGLIGIIIRKNLIAMLLSTELMLNAVNIAFVAFDMKLYDVSGQVFVFFILTIAAAEAAVGLGLIMAIYRLRKDVDVNTLTELKL.

The next 3 membrane-spanning stretches (helical) occupy residues 4-24 (YEYYVVLSGLLMVLGLIGIII), 29-49 (IAMLLSTELMLNAVNIAFVAF), and 60-80 (VFVFFILTIAAAEAAVGLGLI).

It belongs to the complex I subunit 4L family. NDH-1 is composed of 14 different subunits. Subunits NuoA, H, J, K, L, M, N constitute the membrane sector of the complex.

It is found in the cell inner membrane. The enzyme catalyses a quinone + NADH + 5 H(+)(in) = a quinol + NAD(+) + 4 H(+)(out). Functionally, NDH-1 shuttles electrons from NADH, via FMN and iron-sulfur (Fe-S) centers, to quinones in the respiratory chain. The immediate electron acceptor for the enzyme in this species is believed to be ubiquinone. Couples the redox reaction to proton translocation (for every two electrons transferred, four hydrogen ions are translocated across the cytoplasmic membrane), and thus conserves the redox energy in a proton gradient. This Persephonella marina (strain DSM 14350 / EX-H1) protein is NADH-quinone oxidoreductase subunit K.